A 681-amino-acid chain; its full sequence is DNA-directed RNA polymerase subunit beta' (681 aa).

4 residues coordinate Zn(2+): cysteine 69, cysteine 71, cysteine 87, and cysteine 90. Residues aspartate 489, aspartate 491, and aspartate 493 each contribute to the Mg(2+) site.

The protein belongs to the RNA polymerase beta' chain family. RpoC1 subfamily. As to quaternary structure, in plastids the minimal PEP RNA polymerase catalytic core is composed of four subunits: alpha, beta, beta', and beta''. When a (nuclear-encoded) sigma factor is associated with the core the holoenzyme is formed, which can initiate transcription. Mg(2+) serves as cofactor. It depends on Zn(2+) as a cofactor.

It is found in the plastid. Its subcellular location is the chloroplast. The enzyme catalyses RNA(n) + a ribonucleoside 5'-triphosphate = RNA(n+1) + diphosphate. DNA-dependent RNA polymerase catalyzes the transcription of DNA into RNA using the four ribonucleoside triphosphates as substrates. The sequence is that of DNA-directed RNA polymerase subunit beta' from Solanum bulbocastanum (Wild potato).